The following is a 249-amino-acid chain: Probable transcriptional regulatory protein MXAN_4974 (249 aa).

It belongs to the TACO1 family.

The protein resides in the cytoplasm. In Myxococcus xanthus (strain DK1622), this protein is Probable transcriptional regulatory protein MXAN_4974.